Reading from the N-terminus, the 232-residue chain is MSKAVVVFSGGQDSTTCLIQALTQFDEVHAITFDYGQRHNEEIEVAKALASQLRIASHKVMDVSLLNELAISALTRDDIPVSHELMENGLPNTFVPGRNILFLTLAGIYAYQLGANSVITGVCETDFSGYPDCRDQFVRAMETALCLGMDKQINLLTPLMWLNKAETWALADKYHSLTLVKELTLTCYNGIIGQGCGDCPACHLRQKGLDDYLNHKPSVMASLEQKTHGKSA.

8 to 18 serves as a coordination point for ATP; sequence FSGGQDSTTCL. The Zn(2+) site is built by cysteine 187, cysteine 196, cysteine 199, and cysteine 202.

The protein belongs to the QueC family. The cofactor is Zn(2+).

It catalyses the reaction 7-carboxy-7-deazaguanine + NH4(+) + ATP = 7-cyano-7-deazaguanine + ADP + phosphate + H2O + H(+). The protein operates within purine metabolism; 7-cyano-7-deazaguanine biosynthesis. In terms of biological role, catalyzes the ATP-dependent conversion of 7-carboxy-7-deazaguanine (CDG) to 7-cyano-7-deazaguanine (preQ(0)). This is 7-cyano-7-deazaguanine synthase from Shewanella denitrificans (strain OS217 / ATCC BAA-1090 / DSM 15013).